Reading from the N-terminus, the 240-residue chain is Ribonuclease HII (240 aa).

The 200-residue stretch at 27-226 (GPVAGVDEAG…GETRSLRLED (200 aa)) folds into the RNase H type-2 domain. A divalent metal cation contacts are provided by D33, E34, and D127.

This sequence belongs to the RNase HII family. Mn(2+) is required as a cofactor. Requires Mg(2+) as cofactor.

It is found in the cytoplasm. The catalysed reaction is Endonucleolytic cleavage to 5'-phosphomonoester.. Endonuclease that specifically degrades the RNA of RNA-DNA hybrids. This is Ribonuclease HII from Parafrankia sp. (strain EAN1pec).